A 190-amino-acid polypeptide reads, in one-letter code: Peptidyl-tRNA hydrolase (190 aa).

Residue tyrosine 18 coordinates tRNA. Histidine 23 functions as the Proton acceptor in the catalytic mechanism. TRNA contacts are provided by tyrosine 69, asparagine 71, and asparagine 117.

This sequence belongs to the PTH family. Monomer.

The protein resides in the cytoplasm. The catalysed reaction is an N-acyl-L-alpha-aminoacyl-tRNA + H2O = an N-acyl-L-amino acid + a tRNA + H(+). In terms of biological role, hydrolyzes ribosome-free peptidyl-tRNAs (with 1 or more amino acids incorporated), which drop off the ribosome during protein synthesis, or as a result of ribosome stalling. Catalyzes the release of premature peptidyl moieties from peptidyl-tRNA molecules trapped in stalled 50S ribosomal subunits, and thus maintains levels of free tRNAs and 50S ribosomes. The polypeptide is Peptidyl-tRNA hydrolase (Rhodococcus erythropolis (strain PR4 / NBRC 100887)).